Reading from the N-terminus, the 288-residue chain is Probable branched-chain-amino-acid aminotransferase (288 aa).

K153 is modified (N6-(pyridoxal phosphate)lysine).

The protein belongs to the class-IV pyridoxal-phosphate-dependent aminotransferase family. The cofactor is pyridoxal 5'-phosphate.

It carries out the reaction L-leucine + 2-oxoglutarate = 4-methyl-2-oxopentanoate + L-glutamate. The catalysed reaction is L-isoleucine + 2-oxoglutarate = (S)-3-methyl-2-oxopentanoate + L-glutamate. The enzyme catalyses L-valine + 2-oxoglutarate = 3-methyl-2-oxobutanoate + L-glutamate. It participates in amino-acid biosynthesis; L-isoleucine biosynthesis; L-isoleucine from 2-oxobutanoate: step 4/4. Its pathway is amino-acid biosynthesis; L-leucine biosynthesis; L-leucine from 3-methyl-2-oxobutanoate: step 4/4. It functions in the pathway amino-acid biosynthesis; L-valine biosynthesis; L-valine from pyruvate: step 4/4. In terms of biological role, acts on leucine, isoleucine and valine. In Rickettsia typhi (strain ATCC VR-144 / Wilmington), this protein is Probable branched-chain-amino-acid aminotransferase (ilvE).